A 422-amino-acid chain; its full sequence is 5'-deoxyadenosine deaminase (422 aa).

Residues histidine 57 and histidine 59 each coordinate Zn(2+). Residues glutamate 86 and histidine 178 each contribute to the substrate site. A Zn(2+)-binding site is contributed by histidine 205. The substrate site is built by glutamate 208 and aspartate 294. Aspartate 294 contacts Zn(2+).

Belongs to the metallo-dependent hydrolases superfamily. MTA/SAH deaminase family. As to quaternary structure, homotetramer. It depends on Zn(2+) as a cofactor.

The enzyme catalyses 5'-deoxyadenosine + H2O + H(+) = 5'-deoxyinosine + NH4(+). It carries out the reaction S-adenosyl-L-homocysteine + H2O + H(+) = S-inosyl-L-homocysteine + NH4(+). The catalysed reaction is S-methyl-5'-thioadenosine + H2O + H(+) = S-methyl-5'-thioinosine + NH4(+). It catalyses the reaction adenosine + H2O + H(+) = inosine + NH4(+). The protein operates within amino-acid biosynthesis; S-adenosyl-L-methionine biosynthesis. Its function is as follows. Catalyzes the deamination of three SAM-derived enzymatic products, namely 5'-deoxyadenosine, S-adenosyl-L-homocysteine, and 5'-methylthioadenosine, to produce the inosine analogs. Can also deaminate adenosine. The preferred substrate for this enzyme is 5'-deoxyadenosine, but all these substrates are efficiently deaminated. Likely functions in a S-adenosyl-L-methionine (SAM) recycling pathway from S-adenosyl-L-homocysteine (SAH) produced from SAM-dependent methylation reactions. May also be involved in the recycling of 5'-deoxyadenosine, whereupon the 5'-deoxyribose moiety of 5'-deoxyinosine is further metabolized to deoxyhexoses used for the biosynthesis of aromatic amino acids in methanogens. The chain is 5'-deoxyadenosine deaminase from Methanococcus maripaludis (strain DSM 14266 / JCM 13030 / NBRC 101832 / S2 / LL).